Reading from the N-terminus, the 519-residue chain is Ribonuclease Y 1 (519 aa).

Residues 2–22 (IILYIILAIIAIVVGYCAGFF) form a helical membrane-spanning segment. The segment at 84–113 (QKQEDRLLQREDSLDRKDNSFEKRENSLER) is disordered. Residues 209-294 (TITVVSLPND…EMVEKAKKEM (86 aa)) enclose the KH domain. Residues 335-428 (VLNHSIEVAN…VAAANSISAA (94 aa)) form the HD domain.

This sequence belongs to the RNase Y family.

It localises to the cell membrane. Functionally, endoribonuclease that initiates mRNA decay. In Pediococcus pentosaceus (strain ATCC 25745 / CCUG 21536 / LMG 10740 / 183-1w), this protein is Ribonuclease Y 1.